The sequence spans 94 residues: Large ribosomal subunit protein bL27 (94 aa).

Positions 1-9 are excised as a propeptide; that stretch reads MLELNLQLF. The disordered stretch occupies residues 12-33; it reads KKGGGSTSNGRDSQAKRLGAKA.

This sequence belongs to the bacterial ribosomal protein bL27 family. In terms of processing, the N-terminus is cleaved by ribosomal processing cysteine protease Prp.

This chain is Large ribosomal subunit protein bL27, found in Lactococcus lactis subsp. cremoris (strain MG1363).